Reading from the N-terminus, the 280-residue chain is Manganese transport system membrane protein MntC (280 aa).

Helical transmembrane passes span 16 to 36 (ALITSVTVGIVSGVIGSFIIL), 41 to 61 (LMGDAISHAVLPGVAISYMMG), 62 to 82 (MNFFIGAATFGIAAALGIGFV), 92 to 112 (TAIGIVFSAFFALGIILISFA), 137 to 157 (TIIIAILVISLVAIFYKEFLV), 168 to 188 (YGLNVRFLHYFLMLLLTLVTV), 193 to 213 (TVGIILVVAMLITPAATAYLL), 221 to 241 (IMLASTFGAVSAIIGLYFSYI), and 244 to 264 (LASGAAMVLVATIIFFIAFLF).

The protein belongs to the ABC-3 integral membrane protein family.

Its subcellular location is the cell membrane. Its function is as follows. This protein is probably a component of a manganese permease, a binding protein-dependent, ATP-driven transport system. The polypeptide is Manganese transport system membrane protein MntC (mntC) (Listeria innocua serovar 6a (strain ATCC BAA-680 / CLIP 11262)).